Consider the following 388-residue polypeptide: MSWWWAGAIGAAKKKIDEDEAPRNYESVALIVGVTGIVGNSLAEILPLSDTPGGPWKVYGVARRPRPSWNEDHPITYISCDVLDSVDVEAKLSPLTDVTHIFYATWTKRSTEKENCEANGKMLKNVLNAMIPNCPNLKHICLQTGRKHYLGAFEDLKSKCHDPPLTEDLPRLDSQNYYYTQEDILFEEVQKKEGLTWSVHRPGTIFGFSPYSMMNLVGTLCVYAAICKHEGAVLRFPGCKGAWDGYSDCSDADLIAEHQIWAAVDPYAKNEAFNVSNGDVFKWKHFWKVLAEQFGVECGEYEEGQQVKLQDLMKDKGPVWDKIVRENGLSTTKLEDVGNWWFSDIVLGNECWLDTMNKSKEHGFLGFRNSKNSFISWIDKVKAFKIVP.

Residues threonine 35–isoleucine 37, arginine 63–arginine 64, aspartate 81–valine 82, threonine 105–tryptophan 106, and glutamine 143 contribute to the NADP(+) site. Catalysis depends on residues lysine 147 and tyrosine 178. NADP(+) contacts are provided by residues tyrosine 178, isoleucine 205, and serine 212–methionine 214.

This sequence belongs to the short-chain dehydrogenases/reductases (SDR) family.

The catalysed reaction is (S)-8-oxocitronellyl enol + NADP(+) = (6E)-8-oxogeranial + NADPH + H(+). It catalyses the reaction (S)-8-oxocitronellyl enol + NAD(+) = (6E)-8-oxogeranial + NADH + H(+). Iridoid synthase that catalyzes the first step in generation of the iridoid ring scaffold using the linear monoterpene (6E)-8-oxogeranial as substrate. Iridoids comprise a large family of distinctive bicyclic monoterpenes that possess a wide range of pharmacological activities, including anticancer, anti-inflammatory, antifungal and antibacterial activities. Catalyzes the conversion of the linear monoterpene (6E)-8-oxogeranial to (S)-8-oxocitronellyl enol, a precursor of nepetalactones, which are metabolites that are both insect-repellent and have euphoric effect in cats. This chain is (S)-8-oxocitronellyl enol synthase ISY1, found in Nepeta cataria (Catnip).